The sequence spans 359 residues: Tryptophan 2,3-dioxygenase (359 aa).

Residues Phe38–His42 and Arg109 each bind substrate. His295 serves as a coordination point for heme. Thr309 contributes to the substrate binding site.

Belongs to the tryptophan 2,3-dioxygenase family. Homotetramer. Heme is required as a cofactor.

It carries out the reaction L-tryptophan + O2 = N-formyl-L-kynurenine. Its pathway is amino-acid degradation; L-tryptophan degradation via kynurenine pathway; L-kynurenine from L-tryptophan: step 1/2. In terms of biological role, heme-dependent dioxygenase that catalyzes the oxidative cleavage of the L-tryptophan (L-Trp) pyrrole ring and converts L-tryptophan to N-formyl-L-kynurenine. Catalyzes the oxidative cleavage of the indole moiety. This Bdellovibrio bacteriovorus (strain ATCC 15356 / DSM 50701 / NCIMB 9529 / HD100) protein is Tryptophan 2,3-dioxygenase.